Here is a 598-residue protein sequence, read N- to C-terminus: Glutamine--fructose-6-phosphate aminotransferase [isomerizing] (598 aa).

The Nucleophile; for GATase activity role is filled by cysteine 2. The Glutamine amidotransferase type-2 domain occupies 2–218; it reads CGIVGYIGNN…DLSLGYASKD (217 aa). SIS domains are found at residues 277–421 and 450–588; these read VFDE…KRNL and LSKR…VDMP. Lysine 593 functions as the For Fru-6P isomerization activity in the catalytic mechanism.

Homodimer.

The protein localises to the cytoplasm. The catalysed reaction is D-fructose 6-phosphate + L-glutamine = D-glucosamine 6-phosphate + L-glutamate. In terms of biological role, catalyzes the first step in hexosamine metabolism, converting fructose-6P into glucosamine-6P using glutamine as a nitrogen source. In Campylobacter jejuni subsp. jejuni serotype O:2 (strain ATCC 700819 / NCTC 11168), this protein is Glutamine--fructose-6-phosphate aminotransferase [isomerizing].